The sequence spans 260 residues: Cytochrome c oxidase subunit 2 (260 aa).

The Mitochondrial intermembrane portion of the chain corresponds to 1–41; the sequence is MIVLKWLFFTISPCDAAEPWQLGFQDAATPIMQGIIDLHHD. Residues 42–62 form a helical membrane-spanning segment; sequence IFFFLILILVFVLWILVRALW. The Mitochondrial matrix segment spans residues 63 to 86; it reads HFHYKKNAIPQRIVHGTTIEILWT. The helical transmembrane segment at 87-107 threads the bilayer; it reads IFPSIILMFIAIPSFALLYSM. Residues 108–260 lie on the Mitochondrial intermembrane side of the membrane; it reads DEVVVDPAIT…NQLIPQTGEA (153 aa). Histidine 187, cysteine 222, glutamate 224, cysteine 226, histidine 230, and methionine 233 together coordinate Cu cation. Glutamate 224 is a binding site for Mg(2+).

It belongs to the cytochrome c oxidase subunit 2 family. As to quaternary structure, component of the cytochrome c oxidase (complex IV, CIV), a multisubunit enzyme composed of a catalytic core of 3 subunits and several supernumerary subunits. The complex exists as a monomer or a dimer and forms supercomplexes (SCs) in the inner mitochondrial membrane with ubiquinol-cytochrome c oxidoreductase (cytochrome b-c1 complex, complex III, CIII). Requires Cu cation as cofactor.

The protein localises to the mitochondrion inner membrane. The catalysed reaction is 4 Fe(II)-[cytochrome c] + O2 + 8 H(+)(in) = 4 Fe(III)-[cytochrome c] + 2 H2O + 4 H(+)(out). Functionally, component of the cytochrome c oxidase, the last enzyme in the mitochondrial electron transport chain which drives oxidative phosphorylation. The respiratory chain contains 3 multisubunit complexes succinate dehydrogenase (complex II, CII), ubiquinol-cytochrome c oxidoreductase (cytochrome b-c1 complex, complex III, CIII) and cytochrome c oxidase (complex IV, CIV), that cooperate to transfer electrons derived from NADH and succinate to molecular oxygen, creating an electrochemical gradient over the inner membrane that drives transmembrane transport and the ATP synthase. Cytochrome c oxidase is the component of the respiratory chain that catalyzes the reduction of oxygen to water. Electrons originating from reduced cytochrome c in the intermembrane space (IMS) are transferred via the dinuclear copper A center (CU(A)) of subunit 2 and heme A of subunit 1 to the active site in subunit 1, a binuclear center (BNC) formed by heme A3 and copper B (CU(B)). The BNC reduces molecular oxygen to 2 water molecules using 4 electrons from cytochrome c in the IMS and 4 protons from the mitochondrial matrix. The sequence is that of Cytochrome c oxidase subunit 2 (COX2) from Arabidopsis thaliana (Mouse-ear cress).